The primary structure comprises 394 residues: Obg-like ATPase 1 (394 aa).

Positions 21–285 (LKAGIVGLAN…MSPEDAEEEL (265 aa)) constitute an OBG-type G domain. An ATP-binding site is contributed by 30-35 (NVGKST). Positions 34 and 55 each coordinate Mg(2+). Position 89 is a phosphothreonine (Thr89). A Glycyl lysine isopeptide (Lys-Gly) (interchain with G-Cter in ubiquitin) cross-link involves residue Lys98. Residues Ser116 and Ser119 each carry the phosphoserine modification. Leu233 is an ATP binding site. Residues 306–389 (DLISFFTCGP…EDGDIIYFRA (84 aa)) enclose the TGS domain.

The protein belongs to the TRAFAC class OBG-HflX-like GTPase superfamily. OBG GTPase family. YchF/OLA1 subfamily. In terms of assembly, monomer. Interacts with the 26S proteasome subunit RPT6. Mg(2+) is required as a cofactor.

It localises to the cytoplasm. Its function is as follows. Hydrolyzes ATP, and can also hydrolyze GTP with lower efficiency. Has lower affinity for GTP. The chain is Obg-like ATPase 1 from Saccharomyces cerevisiae (strain ATCC 204508 / S288c) (Baker's yeast).